A 344-amino-acid chain; its full sequence is Unsaturated rhamnogalacturonyl hydrolase YesR (344 aa).

Residues 30–31 (DW), Asn-74, and 118–128 (QHTVNAAEYVF) contribute to the substrate site. Asp-135 functions as the Proton donor in the catalytic mechanism. Substrate-binding positions include 198–202 (RANGW) and 308–309 (NA).

This sequence belongs to the glycosyl hydrolase 105 family. Monomer.

It is found in the cytoplasm. The catalysed reaction is 2-O-(4-deoxy-beta-L-threo-hex-4-enopyranuronosyl)-alpha-L-rhamnose + H2O = 5-dehydro-4-deoxy-D-glucuronate + L-rhamnopyranose. Its function is as follows. Catalyzes the hydrolysis of unsaturated rhamnogalacturonan disaccharide to yield unsaturated D-galacturonic acid and L-rhamnose. It cannot act on unsaturated glucuronyl hydrolase (UGL) substrates containing unsaturated D-glucuronic acid at the non-reducing terminus, although the active pockets of YesR and UGL are very similar. The protein is Unsaturated rhamnogalacturonyl hydrolase YesR (yesR) of Bacillus subtilis (strain 168).